We begin with the raw amino-acid sequence, 178 residues long: MINAQAFGMALFQLSEEEKKVKKVYDQSHDFLKLARNFKDGSLAALLNAYTLTKKEKLKLIDKLFKNHFCDLFVDFLKTIVLKGYFNLVEQALKYFFDCVENEKHVQFIRIITAFELSAPQLKRIVAAMEKKLNSKIVYKTEIDKSLISGIRIESSAQLFEKNIRDQLSRLMEQFKGN.

Belongs to the ATPase delta chain family. In terms of assembly, F-type ATPases have 2 components, F(1) - the catalytic core - and F(0) - the membrane proton channel. F(1) has five subunits: alpha(3), beta(3), gamma(1), delta(1), epsilon(1). F(0) has three main subunits: a(1), b(2) and c(10-14). The alpha and beta chains form an alternating ring which encloses part of the gamma chain. F(1) is attached to F(0) by a central stalk formed by the gamma and epsilon chains, while a peripheral stalk is formed by the delta and b chains.

It is found in the cell membrane. Functionally, f(1)F(0) ATP synthase produces ATP from ADP in the presence of a proton or sodium gradient. F-type ATPases consist of two structural domains, F(1) containing the extramembraneous catalytic core and F(0) containing the membrane proton channel, linked together by a central stalk and a peripheral stalk. During catalysis, ATP synthesis in the catalytic domain of F(1) is coupled via a rotary mechanism of the central stalk subunits to proton translocation. In terms of biological role, this protein is part of the stalk that links CF(0) to CF(1). It either transmits conformational changes from CF(0) to CF(1) or is implicated in proton conduction. The polypeptide is ATP synthase subunit delta (Mycoplasma pneumoniae (strain ATCC 29342 / M129 / Subtype 1) (Mycoplasmoides pneumoniae)).